Reading from the N-terminus, the 969-residue chain is RNA polymerase-associated protein RapA (969 aa).

In terms of domain architecture, Helicase ATP-binding spans 164–334 (EVGRRYAPRV…FARLRLLDPD (171 aa)). 177–184 (DEVGLGKT) contacts ATP. The DEAH box motif lies at 280–283 (DEAH). The Helicase C-terminal domain maps to 492–672 (RVNWLLELLK…GLEPLIEESA (181 aa)).

Belongs to the SNF2/RAD54 helicase family. RapA subfamily. In terms of assembly, interacts with the RNAP. Has a higher affinity for the core RNAP than for the holoenzyme. Its ATPase activity is stimulated by binding to RNAP.

In terms of biological role, transcription regulator that activates transcription by stimulating RNA polymerase (RNAP) recycling in case of stress conditions such as supercoiled DNA or high salt concentrations. Probably acts by releasing the RNAP, when it is trapped or immobilized on tightly supercoiled DNA. Does not activate transcription on linear DNA. Probably not involved in DNA repair. The chain is RNA polymerase-associated protein RapA from Aliivibrio salmonicida (strain LFI1238) (Vibrio salmonicida (strain LFI1238)).